Consider the following 134-residue polypeptide: RxLR effector protein 4 (134 aa).

The first 22 residues, 1 to 22, serve as a signal peptide directing secretion; that stretch reads MRSLFYIAVAVAVFARSSAVAA. Residues 43–65 are disordered; the sequence is AMASSDSRKRFLRATDPEDGDLQ. A compositionally biased stretch (basic and acidic residues) spans 48–58; it reads DSRKRFLRATD. The RxLR-dEER motif lies at 52–71; that stretch reads RFLRATDPEDGDLQADDEER.

Belongs to the RxLR effector family.

The protein resides in the secreted. In terms of biological role, effector that enhances plant susceptibility to P.parasitica in Nicotiana benthamiana and Arabidopsis thaliana. Triggers non-specific cell death in a variety of plants, including tobacco, tomato, potato and A.thaliana. E4-induced cell death is dependent on HSP90, NPK and SGT1, suggesting that PpE4 is recognized by the plant immune system. This is RxLR effector protein 4 from Phytophthora nicotianae (strain INRA-310) (Phytophthora parasitica).